The chain runs to 317 residues: Tyrosine--tRNA ligase (317 aa).

An L-tyrosine-binding site is contributed by tyrosine 33. Positions 38–46 (PSGKIHMGH) match the 'HIGH' region motif. Positions 155, 159, 162, and 177 each coordinate L-tyrosine. The 'KMSKS' region signature appears at 211 to 215 (KMASS). Serine 214 is a binding site for ATP.

The protein belongs to the class-I aminoacyl-tRNA synthetase family. TyrS type 3 subfamily. In terms of assembly, homodimer.

The protein localises to the cytoplasm. The catalysed reaction is tRNA(Tyr) + L-tyrosine + ATP = L-tyrosyl-tRNA(Tyr) + AMP + diphosphate + H(+). Functionally, catalyzes the attachment of tyrosine to tRNA(Tyr) in a two-step reaction: tyrosine is first activated by ATP to form Tyr-AMP and then transferred to the acceptor end of tRNA(Tyr). This chain is Tyrosine--tRNA ligase, found in Methanosarcina mazei (strain ATCC BAA-159 / DSM 3647 / Goe1 / Go1 / JCM 11833 / OCM 88) (Methanosarcina frisia).